The primary structure comprises 852 residues: Protein SEY1 (852 aa).

Topologically, residues 1–738 (MNGHFAAIGN…KRSAIGGITQ (738 aa)) are cytoplasmic. The 248-residue stretch at 47 to 294 (GFNYHLISVF…IPADGLSVYA (248 aa)) folds into the GB1/RHD3-type G domain. Position 57 to 64 (57 to 64 (GSQSTGKS)) interacts with GTP. Positions 475 to 500 (QYKLFEKELDEVSARLRKEEMRRLAI) form a coiled coil. A helical membrane pass occupies residues 739–759 (VPLYFYVILLILGWNEILMVL). Over 760–762 (RNP) the chain is Lumenal. Residues 763 to 783 (FLILLILVMGGGTYIAYSLNL) form a helical membrane-spanning segment. At 784-852 (LGPMMQMSNA…AQDISDDDDI (69 aa)) the chain is on the cytoplasmic side.

Belongs to the TRAFAC class dynamin-like GTPase superfamily. GB1/RHD3 GTPase family. RHD3 subfamily.

The protein resides in the endoplasmic reticulum membrane. In terms of biological role, cooperates with the reticulon proteins and tubule-shaping DP1 family proteins to generate and maintain the structure of the tubular endoplasmic reticulum network. Has GTPase activity, which is required for its function in ER organization. The sequence is that of Protein SEY1 from Podospora anserina (strain S / ATCC MYA-4624 / DSM 980 / FGSC 10383) (Pleurage anserina).